A 366-amino-acid polypeptide reads, in one-letter code: S-adenosylmethionine:tRNA ribosyltransferase-isomerase (366 aa).

It belongs to the QueA family. In terms of assembly, monomer.

It is found in the cytoplasm. It catalyses the reaction 7-aminomethyl-7-carbaguanosine(34) in tRNA + S-adenosyl-L-methionine = epoxyqueuosine(34) in tRNA + adenine + L-methionine + 2 H(+). Its pathway is tRNA modification; tRNA-queuosine biosynthesis. Functionally, transfers and isomerizes the ribose moiety from AdoMet to the 7-aminomethyl group of 7-deazaguanine (preQ1-tRNA) to give epoxyqueuosine (oQ-tRNA). The protein is S-adenosylmethionine:tRNA ribosyltransferase-isomerase of Bradyrhizobium diazoefficiens (strain JCM 10833 / BCRC 13528 / IAM 13628 / NBRC 14792 / USDA 110).